The chain runs to 433 residues: Xylose isomerase (433 aa).

Active-site residues include histidine 97 and aspartate 100. Residues glutamate 228, glutamate 264, histidine 267, aspartate 292, aspartate 303, aspartate 305, and aspartate 334 each contribute to the Mg(2+) site.

This sequence belongs to the xylose isomerase family. In terms of assembly, homotetramer. It depends on Mg(2+) as a cofactor.

It is found in the cytoplasm. It carries out the reaction alpha-D-xylose = alpha-D-xylulofuranose. The protein is Xylose isomerase of Fervidobacterium gondwanense.